Consider the following 477-residue polypeptide: UDP-N-acetylmuramate--L-alanine ligase (477 aa).

Residue 112-118 (GTHGKTT) participates in ATP binding.

Belongs to the MurCDEF family.

It localises to the cytoplasm. The enzyme catalyses UDP-N-acetyl-alpha-D-muramate + L-alanine + ATP = UDP-N-acetyl-alpha-D-muramoyl-L-alanine + ADP + phosphate + H(+). Its pathway is cell wall biogenesis; peptidoglycan biosynthesis. Functionally, cell wall formation. The polypeptide is UDP-N-acetylmuramate--L-alanine ligase (Cupriavidus necator (strain ATCC 17699 / DSM 428 / KCTC 22496 / NCIMB 10442 / H16 / Stanier 337) (Ralstonia eutropha)).